The sequence spans 162 residues: Protein A49 (162 aa).

This sequence belongs to the poxviridae A49 protein family.

In Homo sapiens (Human), this protein is Protein A49.